The following is a 208-amino-acid chain: dITP/XTP pyrophosphatase (208 aa).

Residue threonine 16 to lysine 21 coordinates substrate. Mg(2+) is bound by residues glutamate 46 and aspartate 75. The active-site Proton acceptor is the aspartate 75. Substrate-binding positions include serine 76, phenylalanine 155–aspartate 158, lysine 178, and histidine 183–arginine 184.

It belongs to the HAM1 NTPase family. As to quaternary structure, homodimer. It depends on Mg(2+) as a cofactor.

It carries out the reaction XTP + H2O = XMP + diphosphate + H(+). It catalyses the reaction dITP + H2O = dIMP + diphosphate + H(+). The enzyme catalyses ITP + H2O = IMP + diphosphate + H(+). Pyrophosphatase that catalyzes the hydrolysis of nucleoside triphosphates to their monophosphate derivatives, with a high preference for the non-canonical purine nucleotides XTP (xanthosine triphosphate), dITP (deoxyinosine triphosphate) and ITP. Seems to function as a house-cleaning enzyme that removes non-canonical purine nucleotides from the nucleotide pool, thus preventing their incorporation into DNA/RNA and avoiding chromosomal lesions. In Deinococcus deserti (strain DSM 17065 / CIP 109153 / LMG 22923 / VCD115), this protein is dITP/XTP pyrophosphatase.